The sequence spans 383 residues: La protein homolog (383 aa).

Residues 1–43 (MTEVEAKATATEETTKEEEEAPETTAEQTEESAQETSENVSKL) form a disordered region. Residues 15 to 33 (TKEEEEAPETTAEQTEESA) are compositionally biased toward acidic residues. Residues 37 to 129 (SENVSKLEAS…RRHPERPLPE (93 aa)) enclose the HTH La-type RNA-binding domain. Positions 141 to 228 (RTVYVKGFAP…RKMQDDYFEE (88 aa)) constitute an RRM domain. Residues 249–368 (HLPKGASVHL…RTPEGRQASR (120 aa)) form the xRRM domain. The segment at 343-383 (KDQQARRQASNARNKGRTPEGRQASRPPQEWRRKAKGGRGE) is disordered.

The protein localises to the nucleus. The protein resides in the cytoplasm. May be involved in transcription termination by RNA polymerase III. Binds RNA and DNA. Binds to the 3' end of the minus strand of Sindbis virus RNA. This may be significant for Sindbis virus RNA replication. The protein is La protein homolog of Aedes albopictus (Asian tiger mosquito).